Here is a 211-residue protein sequence, read N- to C-terminus: Large ribosomal subunit protein mL48 (211 aa).

Residues 1 to 27 (MSGTLGKVLGVWTNTVSKQGFSLLRFR) constitute a mitochondrion transit peptide. K198 is modified (N6-succinyllysine).

The protein belongs to the mitochondrion-specific ribosomal protein mL48 family. Component of the mitochondrial ribosome large subunit (39S) which comprises a 16S rRNA and about 50 distinct proteins. Interacts with OXA1L.

It localises to the mitochondrion. In Mus musculus (Mouse), this protein is Large ribosomal subunit protein mL48 (Mrpl48).